The primary structure comprises 113 residues: Meiotically up-regulated gene 98 protein, mitochondrial (113 aa).

It localises to the mitochondrion. Has a role in meiosis. The chain is Meiotically up-regulated gene 98 protein, mitochondrial (mug98) from Schizosaccharomyces pombe (strain 972 / ATCC 24843) (Fission yeast).